We begin with the raw amino-acid sequence, 780 residues long: MAPYSLLVTRLQKALGVRQYHVASVLCQRAKVAMSHFEPNEYIHYDLLEKNINIVRKRLNRPLTLSEKIVYGHLDDPASQEIERGKSYLRLRPDRVAMQDATAQMAMLQFISSGLSKVAVPSTIHCDHLIEAQVGGEKDLRRAKDINQEVYNFLATAGAKYGVGFWKPGSGIIHQIILENYAYPGVLLIGTDSHTPNGGGLGGICIGVGGADAVDVMAGIPWELKCPKVIGVKLTGSLSGWSSPKDVILKVAGILTVKGGTGAIVEYHGPGVDSISCTGMATICNMGAEIGATTSVFPYNHRMKKYLSKTGREDIANLADEFKDHLVPDPGCHYDQLIEINLSELKPHINGPFTPDLAHPVAEVGKVAEKEGWPLDIRVGLIGSCTNSSYEDMGRSAAVAKQALAHGLKCKSQFTITPGSEQIRATIERDGYAQILRDLGGIVLANACGPCIGQWDRKDIKKGEKNTIVTSYNRNFTGRNDANPETHAFVTSPEIVTALAIAGTLKFNPETDYLTGTDGKKFRLEAPDADELPKGEFDPGQDTYQHPPKDSSGQHVDVSPTSQRLQLLEPFDKWDGKDLEDLQILIKVKGKCTTDHISAAGPWLKFRGHLDNISNNLLIGAINIENGKANSVRNAVTQEFGPVPDTARYYKKHGIRWVVIGDENYGEGSSREHAALEPRHLGGRAIITKSFARIHETNLKKQGLLPLTFADPADYNKIHPVDKLTIQGLKDFTPGKPLKCIIKHPNGTQETILLNHTFNETQIEWFRAGSALNRMKELQQ.

A mitochondrion-targeting transit peptide spans 1-27 (MAPYSLLVTRLQKALGVRQYHVASVLC). Lys-31 is subject to N6-succinyllysine. Residue Lys-50 is modified to N6-acetyllysine; alternate. At Lys-50 the chain carries N6-succinyllysine; alternate. Gln-99 provides a ligand contact to substrate. N6-acetyllysine; alternate occurs at positions 138 and 144. 2 positions are modified to N6-succinyllysine; alternate: Lys-138 and Lys-144. 192–194 (DSH) serves as a coordination point for substrate. Lys-233 is subject to N6-acetyllysine; alternate. Lys-233 carries the post-translational modification N6-succinyllysine; alternate. Cys-385 serves as a coordination point for [4Fe-4S] cluster. Lys-411 bears the N6-succinyllysine mark. Residues Cys-448 and Cys-451 each contribute to the [4Fe-4S] cluster site. Residues Arg-474 and Arg-479 each contribute to the substrate site. The segment covering 528 to 537 (DADELPKGEF) has biased composition (basic and acidic residues). The interval 528–560 (DADELPKGEFDPGQDTYQHPPKDSSGQHVDVSP) is disordered. Residue Lys-549 is modified to N6-succinyllysine. The segment covering 551–560 (SSGQHVDVSP) has biased composition (polar residues). Ser-559 carries the phosphoserine modification. At Lys-573 the chain carries N6-acetyllysine; alternate. Lys-573 carries the N6-succinyllysine; alternate modification. Residues Lys-577 and Lys-591 each carry the N6-succinyllysine modification. N6-acetyllysine; alternate is present on Lys-605. Position 605 is an N6-succinyllysine; alternate (Lys-605). Residue Arg-607 participates in substrate binding. Lys-628 is modified (N6-succinyllysine). The residue at position 670 (Ser-670) is a Phosphoserine. 670–671 (SR) is a binding site for substrate. Lys-689 bears the N6-succinyllysine mark. 2 positions are modified to N6-acetyllysine; alternate: Lys-723 and Lys-730. N6-succinyllysine; alternate occurs at positions 723 and 730. 3 positions are modified to N6-acetyllysine: Lys-736, Lys-739, and Lys-743.

The protein belongs to the aconitase/IPM isomerase family. In terms of assembly, monomer. [4Fe-4S] cluster serves as cofactor. In terms of processing, forms covalent cross-links mediated by transglutaminase TGM2, between a glutamine and the epsilon-amino group of a lysine residue, forming homopolymers and heteropolymers.

It is found in the mitochondrion. The catalysed reaction is citrate = D-threo-isocitrate. It functions in the pathway carbohydrate metabolism; tricarboxylic acid cycle; isocitrate from oxaloacetate: step 2/2. Functionally, catalyzes the isomerization of citrate to isocitrate via cis-aconitate. In Homo sapiens (Human), this protein is Aconitate hydratase, mitochondrial (ACO2).